Consider the following 130-residue polypeptide: Small ribosomal subunit protein uS8 (130 aa).

The protein belongs to the universal ribosomal protein uS8 family. Part of the 30S ribosomal subunit.

One of the primary rRNA binding proteins, it binds directly to 16S rRNA central domain where it helps coordinate assembly of the platform of the 30S subunit. This is Small ribosomal subunit protein uS8 from Methanotorris igneus (Methanococcus igneus).